Reading from the N-terminus, the 251-residue chain is Putative mediator of RNA polymerase II transcription subunit 18 (251 aa).

This sequence belongs to the Mediator complex subunit 18 family. Component of the Mediator complex.

Its subcellular location is the nucleus. Component of the Mediator complex, a coactivator involved in the regulated transcription of nearly all RNA polymerase II-dependent genes. Mediator functions as a bridge to convey information from gene-specific regulatory proteins to the basal RNA polymerase II transcription machinery. Mediator is recruited to promoters by direct interactions with regulatory proteins and serves as a scaffold for the assembly of a functional preinitiation complex with RNA polymerase II and the general transcription factors. This chain is Putative mediator of RNA polymerase II transcription subunit 18 (med18), found in Dictyostelium discoideum (Social amoeba).